The sequence spans 380 residues: Crotonobetainyl-CoA reductase (380 aa).

This sequence belongs to the acyl-CoA dehydrogenase family. In terms of assembly, homotetramer. FAD is required as a cofactor.

Its subcellular location is the cytoplasm. It catalyses the reaction 4-(trimethylamino)butanoyl-CoA + oxidized [electron-transfer flavoprotein] + H(+) = crotonobetainyl-CoA + reduced [electron-transfer flavoprotein]. It functions in the pathway amine and polyamine metabolism; carnitine metabolism. Functionally, catalyzes the reduction of crotonobetainyl-CoA to gamma-butyrobetainyl-CoA. The polypeptide is Crotonobetainyl-CoA reductase (Shigella flexneri serotype 5b (strain 8401)).